A 2351-amino-acid polypeptide reads, in one-letter code: Protein FAM186A (2351 aa).

Residues 296–340 (EAEKELSLKIIRDLSNENEMLQQKLQDAEEKCEQLIRSKIVIEQL) adopt a coiled-coil conformation. 8 disordered regions span residues 412-460 (ERTP…SWKR), 470-489 (ETSG…SEAK), 505-538 (EMKS…GKSG), 593-667 (QFDD…SEQS), 809-838 (STVQ…SGMS), 868-976 (LQMK…RGLE), 1805-1837 (GGQS…PGQP), and 1888-1907 (FQPP…STPG). Residues 433–446 (DSTKDNVSLKKGDF) are compositionally biased toward basic and acidic residues. Positions 472–484 (SGPNLSDNKSGQK) are enriched in polar residues. Residues 506–520 (MKSFSEDKSKSPTEA) show a composition bias toward basic and acidic residues. A compositionally biased stretch (polar residues) spans 527–538 (LTETKSQGGKSG). Residues 603-612 (GKIKGKKHHI) show a composition bias toward basic residues. Composition is skewed to basic and acidic residues over residues 619–632 (SKEE…ELTK) and 812–823 (QKDHKEKEKQRQ). Residues 812–860 (QKDHKEKEKQRQEQYLQEGQEQMSGMSLKQQLLGERNLLKEHYEKISEN) adopt a coiled-coil conformation. The segment covering 824–838 (EQYLQEGQEQMSGMS) has biased composition (polar residues). Basic and acidic residues-rich tracts occupy residues 901–912 (AEQEEKQKQRGQ), 939–955 (LEKE…EAKH), and 964–976 (KGKE…RGLE). The span at 1816–1835 (PQAPPSPGQLPISRAPPTPG) shows a compositional bias: pro residues. A compositionally biased stretch (polar residues) spans 1894–1907 (AEQSPYLQAPSTPG).

It belongs to the FAM186 family.

In Homo sapiens (Human), this protein is Protein FAM186A (FAM186A).